The primary structure comprises 581 residues: Cytosolic Fe-S cluster assembly factor nar-1 (581 aa).

[4Fe-4S] cluster is bound by residues C20, C68, C71, C74, C215, C270, C457, and C461.

It belongs to the NARF family.

Functionally, component of the cytosolic Fe/S protein assembly machinery. Required for maturation of extramitochondrial Fe/S proteins. May play a role in the transfer of pre-assembled Fe/S clusters to target apoproteins. The sequence is that of Cytosolic Fe-S cluster assembly factor nar-1 (nar-1) from Neurospora crassa (strain ATCC 24698 / 74-OR23-1A / CBS 708.71 / DSM 1257 / FGSC 987).